A 64-amino-acid polypeptide reads, in one-letter code: Conotoxin Am1.1 (64 aa).

The first 22 residues, 1-22, serve as a signal peptide directing secretion; it reads MSCLPVFVILLLLTASGPSVDA. A propeptide spanning residues 23–49 is cleaved from the precursor; sequence RLKTKDDVPLSSFRDNAKSTLRRLQDK. The residue at position 60 (Pro60) is a 4-hydroxyproline; partial; in major form.

Belongs to the conotoxin T superfamily. In terms of processing, contains 2 disulfide bonds. Expressed by the venom duct.

It localises to the secreted. Functionally, probable toxin that inhibits ion channels. The polypeptide is Conotoxin Am1.1 (Conus amadis (Amadis cone)).